Consider the following 290-residue polypeptide: ATP synthase gamma chain (290 aa).

The protein belongs to the ATPase gamma chain family. F-type ATPases have 2 components, CF(1) - the catalytic core - and CF(0) - the membrane proton channel. CF(1) has five subunits: alpha(3), beta(3), gamma(1), delta(1), epsilon(1). CF(0) has three main subunits: a, b and c.

Its subcellular location is the cell inner membrane. Produces ATP from ADP in the presence of a proton gradient across the membrane. The gamma chain is believed to be important in regulating ATPase activity and the flow of protons through the CF(0) complex. This is ATP synthase gamma chain from Paracoccus denitrificans (strain Pd 1222).